The primary structure comprises 381 residues: Neuropeptide Y receptor type 2 (381 aa).

The tract at residues 1–35 (MGPIGTEADENQTVEEMKVEQYGPQTTPRGELVPD) is disordered. At 1-51 (MGPIGTEADENQTVEEMKVEQYGPQTTPRGELVPDPEPELIDSTKLIEVQV) the chain is on the extracellular side. N11 carries an N-linked (GlcNAc...) asparagine glycan. Residues 52–72 (VLILAYCSIILLGVIGNSLVI) form a helical membrane-spanning segment. At 73–86 (HVVIKFKSMRTVTN) the chain is on the cytoplasmic side. A helical membrane pass occupies residues 87–107 (FFIANLAVADLVVNTLCLPFT). Residues 108 to 124 (LTYTLMGEWKMGPVLCH) lie on the Extracellular side of the membrane. A disulfide bond links C123 and C203. A helical transmembrane segment spans residues 125–145 (LVPYAQGLAVQVSTITLTVIA). Residues 146–165 (LDRHRCIVYHLESKISKRIS) lie on the Cytoplasmic side of the membrane. Residues 166–186 (FLIIGLAWGISALLASPLAIF) form a helical membrane-spanning segment. The Extracellular portion of the chain corresponds to 187–216 (REYSLIEIIPDFEIVACTEKWPGEEKSIYG). The chain crosses the membrane as a helical span at residues 217–237 (TVYSLSSLLILYVLPLGIISF). Topologically, residues 238–268 (SYTRIWSKLKSHVSPGAANDHYHQRRQKTTK) are cytoplasmic. The helical transmembrane segment at 269-289 (MLVCVVVVFAVSWLPLHAFQL) threads the bilayer. The Extracellular portion of the chain corresponds to 290-304 (AVDIDSHVLDLKEYK). Residues 305 to 325 (LIFTVFHIIAMCSTFANPLLY) traverse the membrane as a helical segment. Residues 326-381 (GWMNSNYRKAFLSAFRCEQRLDAIHSEVSVTFKAKKNLEVRKNSGPNDSFTEATNV) lie on the Cytoplasmic side of the membrane. C342 is lipidated: S-palmitoyl cysteine.

The protein belongs to the G-protein coupled receptor 1 family.

It localises to the cell membrane. Receptor for neuropeptide Y and peptide YY. The chain is Neuropeptide Y receptor type 2 (NPY2R) from Macaca mulatta (Rhesus macaque).